Reading from the N-terminus, the 201-residue chain is dITP/XTP pyrophosphatase (201 aa).

7–12 contacts substrate; sequence SNNAHK. Asp-72 serves as the catalytic Proton acceptor. Asp-72 provides a ligand contact to Mg(2+). Residues Ser-73, 154–157, Lys-177, and 182–183 contribute to the substrate site; these read FGYD and HR.

Belongs to the HAM1 NTPase family. In terms of assembly, homodimer. It depends on Mg(2+) as a cofactor.

It catalyses the reaction XTP + H2O = XMP + diphosphate + H(+). It carries out the reaction dITP + H2O = dIMP + diphosphate + H(+). The enzyme catalyses ITP + H2O = IMP + diphosphate + H(+). Its function is as follows. Pyrophosphatase that catalyzes the hydrolysis of nucleoside triphosphates to their monophosphate derivatives, with a high preference for the non-canonical purine nucleotides XTP (xanthosine triphosphate), dITP (deoxyinosine triphosphate) and ITP. Seems to function as a house-cleaning enzyme that removes non-canonical purine nucleotides from the nucleotide pool, thus preventing their incorporation into DNA/RNA and avoiding chromosomal lesions. The polypeptide is dITP/XTP pyrophosphatase (Leuconostoc mesenteroides subsp. mesenteroides (strain ATCC 8293 / DSM 20343 / BCRC 11652 / CCM 1803 / JCM 6124 / NCDO 523 / NBRC 100496 / NCIMB 8023 / NCTC 12954 / NRRL B-1118 / 37Y)).